A 76-amino-acid chain; its full sequence is ATP synthase subunit 9, mitochondrial (76 aa).

2 helical membrane passes run 14-34 (MATL…VALI) and 52-72 (ILGF…SFLL).

This sequence belongs to the ATPase C chain family. As to quaternary structure, F-type ATPases have 2 components, CF(1) - the catalytic core - and CF(0) - the membrane proton channel. CF(1) has five subunits: alpha(3), beta(3), gamma(1), delta(1), epsilon(1). CF(0) has three main subunits: a, b and c.

Its subcellular location is the mitochondrion membrane. In terms of biological role, mitochondrial membrane ATP synthase (F(1)F(0) ATP synthase or Complex V) produces ATP from ADP in the presence of a proton gradient across the membrane which is generated by electron transport complexes of the respiratory chain. F-type ATPases consist of two structural domains, F(1) - containing the extramembraneous catalytic core and F(0) - containing the membrane proton channel, linked together by a central stalk and a peripheral stalk. During catalysis, ATP synthesis in the catalytic domain of F(1) is coupled via a rotary mechanism of the central stalk subunits to proton translocation. Part of the complex F(0) domain. A homomeric c-ring of probably 10 subunits is part of the complex rotary element. The polypeptide is ATP synthase subunit 9, mitochondrial (ATP9) (Debaryomyces hansenii (strain ATCC 36239 / CBS 767 / BCRC 21394 / JCM 1990 / NBRC 0083 / IGC 2968) (Yeast)).